Reading from the N-terminus, the 388-residue chain is Alanine racemase (388 aa).

The active-site Proton acceptor; specific for D-alanine is Lys44. N6-(pyridoxal phosphate)lysine is present on Lys44. Arg142 serves as a coordination point for substrate. The Proton acceptor; specific for L-alanine role is filled by Tyr273. Residue Met321 coordinates substrate.

This sequence belongs to the alanine racemase family. It depends on pyridoxal 5'-phosphate as a cofactor.

It catalyses the reaction L-alanine = D-alanine. It participates in amino-acid biosynthesis; D-alanine biosynthesis; D-alanine from L-alanine: step 1/1. Its function is as follows. Catalyzes the interconversion of L-alanine and D-alanine. May also act on other amino acids. This chain is Alanine racemase (alr), found in Mycobacterium ulcerans (strain Agy99).